Here is a 308-residue protein sequence, read N- to C-terminus: Ribonuclease 3 (308 aa).

The RNase III domain maps to 20-145 (YLRFYKMLGF…LVGAIYLDRG (126 aa)). Residue glutamate 62 coordinates Mg(2+). Aspartate 66 is a catalytic residue. Mg(2+)-binding residues include asparagine 131 and glutamate 134. Glutamate 134 is a catalytic residue. The region spanning 173–242 (NFKSKLIEWS…ARVALGKIKN (70 aa)) is the DRBM domain. The segment at 261-281 (QEEVTVSDSKPSDSGAVTPDL) is disordered.

It belongs to the ribonuclease III family. Homodimer. Mg(2+) serves as cofactor.

It localises to the cytoplasm. The enzyme catalyses Endonucleolytic cleavage to 5'-phosphomonoester.. Digests double-stranded RNA. Involved in the processing of primary rRNA transcript to yield the immediate precursors to the large and small rRNAs (23S and 16S). Processes some mRNAs, and tRNAs when they are encoded in the rRNA operon. Processes pre-crRNA and tracrRNA of type II CRISPR loci if present in the organism. The protein is Ribonuclease 3 of Phocaeicola vulgatus (strain ATCC 8482 / DSM 1447 / JCM 5826 / CCUG 4940 / NBRC 14291 / NCTC 11154) (Bacteroides vulgatus).